Consider the following 278-residue polypeptide: Potassium/proton antiporter CemA (278 aa).

The next 4 helical transmembrane spans lie at Val-61 to Gly-81, Cys-154 to Ile-174, Ile-203 to Ile-223, and Phe-238 to Ile-258.

This sequence belongs to the CemA family.

It is found in the plastid. Its subcellular location is the chloroplast inner membrane. It carries out the reaction K(+)(in) + H(+)(out) = K(+)(out) + H(+)(in). Its function is as follows. Contributes to K(+)/H(+) antiport activity by supporting proton efflux to control proton extrusion and homeostasis in chloroplasts in a light-dependent manner to modulate photosynthesis. Prevents excessive induction of non-photochemical quenching (NPQ) under continuous-light conditions. Indirectly promotes efficient inorganic carbon uptake into chloroplasts. The protein is Potassium/proton antiporter CemA of Gracilaria tenuistipitata var. liui (Red alga).